The primary structure comprises 199 residues: Pneumococcal vaccine antigen A homolog (199 aa).

It localises to the cell surface. The protein is Pneumococcal vaccine antigen A homolog (pvaA) of Streptococcus pyogenes serotype M18 (strain MGAS8232).